Here is a 445-residue protein sequence, read N- to C-terminus: WD repeat domain phosphoinositide-interacting protein 2 (445 aa).

Residues 182 to 222 form a WD 1 repeat; sequence AHDSPLAALAFDASGTKLATASEKGTVIRVFSIPEGQKLFE. The short motif at 223–226 is the L/FRRG motif element; the sequence is FRRG. WD repeat units follow at residues 228-267 and 311-349; these read KRCVSICSLAFSMDGMFLSASSNTETVHIFKLEAVREKPP and GHKNICSLTTIQKIPRLLVGASDGYLYMYNLDPQEGGEC. Serine 395 bears the Phosphoserine mark.

The protein belongs to the WD repeat PROPPIN family. In terms of assembly, interacts with TECPR1. Interacts with ATG16L1. Interacts with ATG5. Interacts with WIPI1. Interacts with WDR45. May interact with NUDC. Interacts with ULK1 and RB1CC1.

The protein localises to the preautophagosomal structure membrane. Functionally, component of the autophagy machinery that controls the major intracellular degradation process by which cytoplasmic materials are packaged into autophagosomes and delivered to lysosomes for degradation. Involved in an early step of the formation of preautophagosomal structures. Binds and is activated by phosphatidylinositol 3-phosphate (PtdIns3P) forming on membranes of the endoplasmic reticulum upon activation of the upstream ULK1 and PI3 kinases. Mediates ER-isolation membranes contacts by interacting with the ULK1:RB1CC1 complex and PtdIns3P. Once activated, WIPI2 recruits at phagophore assembly sites the ATG12-ATG5-ATG16L1 complex that directly controls the elongation of the nascent autophagosomal membrane. The sequence is that of WD repeat domain phosphoinositide-interacting protein 2 from Mus musculus (Mouse).